The primary structure comprises 594 residues: Potassium-transporting ATPase potassium-binding subunit (594 aa).

10 consecutive transmembrane segments (helical) span residues 3 to 23, 67 to 87, 136 to 156, 179 to 199, 287 to 307, 314 to 334, 415 to 435, 453 to 473, 519 to 539, and 562 to 582; these read ADFL…APLL, AVAM…LQRL, ALTV…IALV, LYVL…QGVV, LEML…GEMV, VAIL…AAYF, GLYG…LMIG, VALV…VAVL, VLLG…ILAL, and LFVA…YVPA.

Belongs to the KdpA family. In terms of assembly, the system is composed of three essential subunits: KdpA, KdpB and KdpC.

Its subcellular location is the cell inner membrane. Part of the high-affinity ATP-driven potassium transport (or Kdp) system, which catalyzes the hydrolysis of ATP coupled with the electrogenic transport of potassium into the cytoplasm. This subunit binds the periplasmic potassium ions and delivers the ions to the membrane domain of KdpB through an intramembrane tunnel. The sequence is that of Potassium-transporting ATPase potassium-binding subunit from Bordetella bronchiseptica (strain ATCC BAA-588 / NCTC 13252 / RB50) (Alcaligenes bronchisepticus).